The sequence spans 403 residues: Tryptophan 2,3-dioxygenase (403 aa).

Residue 69-73 coordinates substrate; sequence FIVIH. A PLD motif; required for enzymatic activity motif is present at residues 133–135; it reads PLD. R140 lines the substrate pocket. Residue H327 coordinates heme. A substrate-binding site is contributed by T341.

This sequence belongs to the tryptophan 2,3-dioxygenase family. As to quaternary structure, homotetramer. Dimer of dimers. Requires heme as cofactor. In terms of tissue distribution, expressed in body wall muscle cells, hypodermis, PLM neurons and touch-receptor neurons.

The catalysed reaction is L-tryptophan + O2 = N-formyl-L-kynurenine. The protein operates within amino-acid degradation; L-tryptophan degradation via kynurenine pathway; L-kynurenine from L-tryptophan: step 1/2. Functionally, heme-dependent dioxygenase that catalyzes the oxidative cleavage of the L-tryptophan (L-Trp) pyrrole ring and converts L-tryptophan to N-formyl-L-kynurenine. Catalyzes the oxidative cleavage of the indole moiety. Involved in regulation of protein homeostasis, longevity and reproducive life span. Specifically regulates proteotoxicity due to age-related aggregation of proteins like alpha-synuclein, via its effects on tryptophan metabolism. This is Tryptophan 2,3-dioxygenase from Caenorhabditis elegans.